Consider the following 266-residue polypeptide: MPLTPADVHNVAFSKPPIGKRGYNEDEVDAFLDLVENELTQLIEENSDLRQRIEELDHELAAGGGTGAGPVIAVQPTQALSTFEPELVSAKQAPVAAVAETAEELAMKATRVLSLAQDTADQLTSTAKVESDKMLADARVNADQILGEARLTAEATVAEAQQRADAMLADAQTRSEVQSRQAQEKADALQAEAERKHSEIMGAISQQRTVLEGRLEQLRTFEREYRTRLKTYLESQLEELGQRGSAAPVDSNADAGGFDQFNRGNN.

Residues phenylalanine 31–glycine 64 are a coiled coil. At threonine 77 the chain carries Phosphothreonine. Residues threonine 152–alanine 203 are a coiled coil. Residues glutamate 239–asparagine 266 are disordered.

The protein belongs to the DivIVA family. In terms of assembly, forms homooligomers. Phosphorylated by PknA.

Its subcellular location is the cytoplasm. Functionally, important for maintaining cell shape and cell wall integrity by localizing peptidoglycan synthesis to the cell poles. In Mycobacterium leprae (strain TN), this protein is Cell wall synthesis protein Wag31 (wag31).